The chain runs to 466 residues: Cytochrome P450 85A (466 aa).

Residues 2–22 (ALFMAILGVLVLLLCLCSALL) traverse the membrane as a helical segment. Cysteine 414 is a binding site for heme.

This sequence belongs to the cytochrome P450 family. It depends on heme as a cofactor.

Its subcellular location is the membrane. Catalyzes the C6-oxidation step in brassinosteroids biosynthesis. This chain is Cytochrome P450 85A, found in Phaseolus vulgaris (Kidney bean).